Consider the following 399-residue polypeptide: uncharacterized protein (399 aa).

The span at 197–206 (ENSSASSVTS) shows a compositional bias: polar residues. Residues 197 to 224 (ENSSASSVTSEECEQDVMDEQSAEDNEE) form a disordered region. The span at 207 to 224 (EECEQDVMDEQSAEDNEE) shows a compositional bias: acidic residues.

This is an uncharacterized protein from Diadromus pulchellus (Parasitic wasp).